We begin with the raw amino-acid sequence, 204 residues long: Glycerol-3-phosphate acyltransferase (204 aa).

Helical transmembrane passes span 8 to 28, 76 to 96, 122 to 142, and 166 to 186; these read NAQF…LLLA, GVLV…LWGI, MGVM…VWAL, and FILH…VLLY.

Belongs to the PlsY family. In terms of assembly, probably interacts with PlsX.

The protein localises to the cell inner membrane. The enzyme catalyses an acyl phosphate + sn-glycerol 3-phosphate = a 1-acyl-sn-glycero-3-phosphate + phosphate. Its pathway is lipid metabolism; phospholipid metabolism. Functionally, catalyzes the transfer of an acyl group from acyl-phosphate (acyl-PO(4)) to glycerol-3-phosphate (G3P) to form lysophosphatidic acid (LPA). This enzyme utilizes acyl-phosphate as fatty acyl donor, but not acyl-CoA or acyl-ACP. This Sulfurimonas denitrificans (strain ATCC 33889 / DSM 1251) (Thiomicrospira denitrificans (strain ATCC 33889 / DSM 1251)) protein is Glycerol-3-phosphate acyltransferase.